The chain runs to 424 residues: Enolase (424 aa).

Position 164 (Gln164) interacts with (2R)-2-phosphoglycerate. Glu206 (proton donor) is an active-site residue. Positions 243, 284, and 311 each coordinate Mg(2+). (2R)-2-phosphoglycerate-binding residues include Lys336, Arg365, Ser366, and Lys387. The active-site Proton acceptor is the Lys336.

This sequence belongs to the enolase family. The cofactor is Mg(2+).

The protein resides in the cytoplasm. Its subcellular location is the secreted. It is found in the cell surface. The catalysed reaction is (2R)-2-phosphoglycerate = phosphoenolpyruvate + H2O. Its pathway is carbohydrate degradation; glycolysis; pyruvate from D-glyceraldehyde 3-phosphate: step 4/5. Catalyzes the reversible conversion of 2-phosphoglycerate (2-PG) into phosphoenolpyruvate (PEP). It is essential for the degradation of carbohydrates via glycolysis. This Wolbachia sp. subsp. Drosophila simulans (strain wRi) protein is Enolase.